Consider the following 456-residue polypeptide: Palmitoyltransferase PFA4 (456 aa).

The Cytoplasmic portion of the chain corresponds to 1-9 (MAARNWSRV). A helical transmembrane segment spans residues 10–30 (WVGGTVILISFIAFSSQIFVI). Over 31 to 37 (WPWYGRE) the chain is Lumenal. A helical membrane pass occupies residues 38 to 58 (ISLDLLMLLVPLNLAAFMIFW). Topologically, residues 59–138 (NYRLCVITSP…GNCVGFYNQG (80 aa)) are cytoplasmic. Residues 95–145 (RYCKNCAHYKPPRAHHCRQCKTCWLKLDHHCPWIGNCVGFYNQGHFIRFLL) form the DHHC domain. Cys125 (S-palmitoyl cysteine intermediate) is an active-site residue. Residues 139–159 (HFIRFLLWVDIGTTFHLIIMV) traverse the membrane as a helical segment. Residues 160 to 176 (RRVLYIAEYYHEPTLAD) are Lumenal-facing. A helical transmembrane segment spans residues 177 to 197 (VLFLVFNFATCVPVWLCVGMF). The Cytoplasmic segment spans residues 198–456 (SIYHVYLACG…DPEEESGYTH (259 aa)). Residues 284-377 (PPQDPSRLPN…YDHYDEGPMY (94 aa)) form a disordered region. Pro residues predominate over residues 285–298 (PQDPSRLPNPPPIP). A compositionally biased stretch (polar residues) spans 309-321 (NGFNPNLRPTNSL). Residues 337–352 (SHEQGRHYSSGDERDN) are compositionally biased toward basic and acidic residues.

Belongs to the DHHC palmitoyltransferase family. PFA4 subfamily.

It is found in the endoplasmic reticulum membrane. It carries out the reaction L-cysteinyl-[protein] + hexadecanoyl-CoA = S-hexadecanoyl-L-cysteinyl-[protein] + CoA. Mediates the reversible addition of palmitate to target proteins, thereby regulating their membrane association and biological function. Responsible for the modification of a subset of proteins that are critical in cryptococcal pathogenesis, with substrates involved in cell wall synthesis, signal transduction, and membrane trafficking. Palmitoylates chitin synthase CHS3. The polypeptide is Palmitoyltransferase PFA4 (Cryptococcus neoformans var. grubii serotype A (strain H99 / ATCC 208821 / CBS 10515 / FGSC 9487) (Filobasidiella neoformans var. grubii)).